The primary structure comprises 122 residues: Large ribosomal subunit protein uL14 (122 aa).

The protein belongs to the universal ribosomal protein uL14 family. Part of the 50S ribosomal subunit. Forms a cluster with proteins L3 and L19. In the 70S ribosome, L14 and L19 interact and together make contacts with the 16S rRNA in bridges B5 and B8.

In terms of biological role, binds to 23S rRNA. Forms part of two intersubunit bridges in the 70S ribosome. The protein is Large ribosomal subunit protein uL14 of Sulfurihydrogenibium sp. (strain YO3AOP1).